A 166-amino-acid chain; its full sequence is NAD(P)H-quinone oxidoreductase subunit I, chloroplastic (166 aa).

4Fe-4S ferredoxin-type domains are found at residues 55-84 (GRIH…VDWK) and 95-124 (LNYS…MTEE). Cys64, Cys67, Cys70, Cys74, Cys104, Cys107, Cys110, and Cys114 together coordinate [4Fe-4S] cluster.

It belongs to the complex I 23 kDa subunit family. As to quaternary structure, NDH is composed of at least 16 different subunits, 5 of which are encoded in the nucleus. [4Fe-4S] cluster is required as a cofactor.

It localises to the plastid. It is found in the chloroplast thylakoid membrane. It carries out the reaction a plastoquinone + NADH + (n+1) H(+)(in) = a plastoquinol + NAD(+) + n H(+)(out). The catalysed reaction is a plastoquinone + NADPH + (n+1) H(+)(in) = a plastoquinol + NADP(+) + n H(+)(out). Functionally, NDH shuttles electrons from NAD(P)H:plastoquinone, via FMN and iron-sulfur (Fe-S) centers, to quinones in the photosynthetic chain and possibly in a chloroplast respiratory chain. The immediate electron acceptor for the enzyme in this species is believed to be plastoquinone. Couples the redox reaction to proton translocation, and thus conserves the redox energy in a proton gradient. The sequence is that of NAD(P)H-quinone oxidoreductase subunit I, chloroplastic from Steiractinia sodiroi.